The primary structure comprises 96 residues: Small ribosomal subunit protein bS6 (96 aa).

This sequence belongs to the bacterial ribosomal protein bS6 family.

Functionally, binds together with bS18 to 16S ribosomal RNA. This chain is Small ribosomal subunit protein bS6, found in Mycobacteroides abscessus (strain ATCC 19977 / DSM 44196 / CCUG 20993 / CIP 104536 / JCM 13569 / NCTC 13031 / TMC 1543 / L948) (Mycobacterium abscessus).